The following is a 335-amino-acid chain: Tetraacyldisaccharide 4'-kinase (335 aa).

58–65 (VVGGSGKT) contributes to the ATP binding site.

This sequence belongs to the LpxK family.

The enzyme catalyses a lipid A disaccharide + ATP = a lipid IVA + ADP + H(+). It functions in the pathway glycolipid biosynthesis; lipid IV(A) biosynthesis; lipid IV(A) from (3R)-3-hydroxytetradecanoyl-[acyl-carrier-protein] and UDP-N-acetyl-alpha-D-glucosamine: step 6/6. In terms of biological role, transfers the gamma-phosphate of ATP to the 4'-position of a tetraacyldisaccharide 1-phosphate intermediate (termed DS-1-P) to form tetraacyldisaccharide 1,4'-bis-phosphate (lipid IVA). In Hydrogenovibrio crunogenus (strain DSM 25203 / XCL-2) (Thiomicrospira crunogena), this protein is Tetraacyldisaccharide 4'-kinase.